We begin with the raw amino-acid sequence, 110 residues long: Small ribosomal subunit protein uS10 (110 aa).

This sequence belongs to the universal ribosomal protein uS10 family. In terms of assembly, part of the 30S ribosomal subunit.

Involved in the binding of tRNA to the ribosomes. In Coxiella burnetii (strain Dugway 5J108-111), this protein is Small ribosomal subunit protein uS10.